A 385-amino-acid chain; its full sequence is MKIDAVKKLLMIPGPTMVPPEVLNAMALPVIGHRTKDYSNLLEDTIEKLKKVFITENDTFLITGSGTAAMDMAISNIIKRGDKVLNIVTGNFGERFANIVKAYKGEAIRLDVEWGDMAEPEAVKEILDKYDDIKAVTVVHNETSTGARNPIKEIGEVVKDYDALYIVDTVSSLGGDYVNVDKFHIDICVTGSQKCLAAPPGLAAITVSEKAWEVIKKNDDKVGFYLDLLAYKKYYEEKKQTPYTPSVNLTYALNVALDLVLEEGIENRVKRHERLAKATRAGLEAMGIELFAKERARSVTVTSAKYPEGIEDSKFRGILSNKYNIVVAGGQKHLAGKIFRIGHMGICGEKEVLATLACVELALKELGFEVKESGVEVAKEVLLKE.

Lys-194 is subject to N6-(pyridoxal phosphate)lysine.

Belongs to the class-V pyridoxal-phosphate-dependent aminotransferase family. Pyridoxal 5'-phosphate is required as a cofactor.

This is an uncharacterized protein from Methanocaldococcus jannaschii (strain ATCC 43067 / DSM 2661 / JAL-1 / JCM 10045 / NBRC 100440) (Methanococcus jannaschii).